Here is a 163-residue protein sequence, read N- to C-terminus: Nucleotide-binding protein Dvul_1191 (163 aa).

Belongs to the YajQ family.

Nucleotide-binding protein. This Nitratidesulfovibrio vulgaris (strain DP4) (Desulfovibrio vulgaris) protein is Nucleotide-binding protein Dvul_1191.